A 229-amino-acid chain; its full sequence is Putative 3-methyladenine DNA glycosylase (229 aa).

This sequence belongs to the DNA glycosylase MPG family.

This is Putative 3-methyladenine DNA glycosylase from Enterococcus faecalis (strain ATCC 700802 / V583).